A 124-amino-acid polypeptide reads, in one-letter code: Fluoride-specific ion channel FluC (124 aa).

4 helical membrane-spanning segments follow: residues 5-27, 42-62, 63-83, and 95-115; these read LFVA…LMLQ, ILGS…EVSP, EIKA…STFS, and LVKA…VVYL. Positions 74 and 77 each coordinate Na(+).

The protein belongs to the fluoride channel Fluc/FEX (TC 1.A.43) family.

The protein localises to the cell inner membrane. It carries out the reaction fluoride(in) = fluoride(out). With respect to regulation, na(+) is not transported, but it plays an essential structural role and its presence is essential for fluoride channel function. In terms of biological role, fluoride-specific ion channel. Important for reducing fluoride concentration in the cell, thus reducing its toxicity. This Shewanella piezotolerans (strain WP3 / JCM 13877) protein is Fluoride-specific ion channel FluC.